A 470-amino-acid chain; its full sequence is Neuraminidase (470 aa).

Residues 1-14 (MNPNQKIITIGSAS) are Intravirion-facing. Residues 11–32 (GSASLGLVFLNVILHVVSITVT) are involved in apical transport and lipid raft association. The helical transmembrane segment at 15–35 (LGLVFLNVILHVVSITVTVLV) threads the bilayer. The tract at residues 32 to 86 (TVLVLSNNVTGPNCNGTIIREYNGTVRIERITQWYNTNIIEYIERPSNEYYMSNT) is hypervariable stalk region. Residues 36-470 (LSNNVTGPNC…AILPFDIDKM (435 aa)) are Virion surface-facing. Residues Asn-39, Asn-46, and Asn-54 are each glycosylated (N-linked (GlcNAc...) asparagine; by host). Positions 89 to 470 (LCEAQGFAPF…AILPFDIDKM (382 aa)) are head of neuraminidase. Cystine bridges form between Cys-90–Cys-417, Cys-122–Cys-127, Cys-182–Cys-229, Cys-231–Cys-236, Cys-277–Cys-290, Cys-279–Cys-288, Cys-316–Cys-335, and Cys-421–Cys-446. Substrate is bound at residue Arg-116. N-linked (GlcNAc...) asparagine; by host glycosylation is present at Asn-144. Asp-149 (proton donor/acceptor) is an active-site residue. Arg-150 lines the substrate pocket. A substrate-binding site is contributed by 275–276 (EE). Substrate is bound at residue Arg-291. Residue Asp-292 participates in Ca(2+) binding. A glycan (N-linked (GlcNAc...) asparagine; by host) is linked at Asn-293. Ca(2+) is bound by residues Gly-296 and Asp-322. Position 368 (Arg-368) interacts with substrate. A glycan (N-linked (GlcNAc...) asparagine; by host) is linked at Asn-398. The Nucleophile role is filled by Tyr-402.

This sequence belongs to the glycosyl hydrolase 34 family. Homotetramer. Requires Ca(2+) as cofactor. N-glycosylated.

It is found in the virion membrane. The protein localises to the host apical cell membrane. The enzyme catalyses Hydrolysis of alpha-(2-&gt;3)-, alpha-(2-&gt;6)-, alpha-(2-&gt;8)- glycosidic linkages of terminal sialic acid residues in oligosaccharides, glycoproteins, glycolipids, colominic acid and synthetic substrates.. With respect to regulation, inhibited by the neuraminidase inhibitors zanamivir (Relenza) and oseltamivir (Tamiflu). These drugs interfere with the release of progeny virus from infected cells and are effective against all influenza strains. Resistance to neuraminidase inhibitors is quite rare. Functionally, catalyzes the removal of terminal sialic acid residues from viral and cellular glycoconjugates. Cleaves off the terminal sialic acids on the glycosylated HA during virus budding to facilitate virus release. Additionally helps virus spread through the circulation by further removing sialic acids from the cell surface. These cleavages prevent self-aggregation and ensure the efficient spread of the progeny virus from cell to cell. Otherwise, infection would be limited to one round of replication. Described as a receptor-destroying enzyme because it cleaves a terminal sialic acid from the cellular receptors. May facilitate viral invasion of the upper airways by cleaving the sialic acid moieties on the mucin of the airway epithelial cells. Likely to plays a role in the budding process through its association with lipid rafts during intracellular transport. May additionally display a raft-association independent effect on budding. Plays a role in the determination of host range restriction on replication and virulence. Sialidase activity in late endosome/lysosome traffic seems to enhance virus replication. This is Neuraminidase from Aves (Horse).